Here is a 355-residue protein sequence, read N- to C-terminus: NADH dehydrogenase [ubiquinone] 1 alpha subcomplex subunit 10, mitochondrial (355 aa).

The N-terminal 35 residues, 1–35 (MALRLLKLAATSASARVVAAGAQRVRGIHSSVQCK), are a transit peptide targeting the mitochondrion. Position 250 is a phosphoserine; by PINK1 (serine 250). The residue at position 285 (lysine 285) is an N6-succinyllysine.

Belongs to the complex I NDUFA10 subunit family. As to quaternary structure, complex I is composed of 45 different subunits. This a component of the hydrophobic protein fraction. Requires FAD as cofactor. Post-translationally, phosphorylation at Ser-250 by PINK1 is required for the binding and/or reduction of the complex I substrate ubiquinone.

The protein localises to the mitochondrion matrix. In terms of biological role, accessory subunit of the mitochondrial membrane respiratory chain NADH dehydrogenase (Complex I), that is believed not to be involved in catalysis. Complex I functions in the transfer of electrons from NADH to the respiratory chain. The immediate electron acceptor for the enzyme is believed to be ubiquinone. The chain is NADH dehydrogenase [ubiquinone] 1 alpha subcomplex subunit 10, mitochondrial (NDUFA10) from Homo sapiens (Human).